We begin with the raw amino-acid sequence, 109 residues long: Small ribosomal subunit protein uS10c (109 aa).

Belongs to the universal ribosomal protein uS10 family. As to quaternary structure, part of the 30S ribosomal subunit.

It is found in the plastid. Its subcellular location is the chloroplast. Functionally, involved in the binding of tRNA to the ribosomes. In Cyanidium caldarium (Red alga), this protein is Small ribosomal subunit protein uS10c.